We begin with the raw amino-acid sequence, 327 residues long: Sugar transporter ERD6-like 9 (327 aa).

A run of 8 helical transmembrane segments spans residues 26 to 46 (FLVFTTFIIVSASFSFGVALG), 68 to 88 (VFGSLLTFGGMIGALFSATIA), 102 to 122 (VFCISGWLAIALAKNIIWLDL), 125 to 145 (FFVGIGVGLLSYVVPVYIAEI), 152 to 172 (GTFTFSNQLLQNCGVATAYYL), 180 to 200 (IIALIGILPCLIQLVGLFFVP), 260 to 280 (LTIGIGLMLLQQLSGSAGLGY), and 295 to 315 (IGMTVLSIVVVPKAILGLILV).

This sequence belongs to the major facilitator superfamily. Sugar transporter (TC 2.A.1.1) family.

The protein localises to the membrane. Functionally, sugar transporter. The polypeptide is Sugar transporter ERD6-like 9 (Arabidopsis thaliana (Mouse-ear cress)).